The chain runs to 129 residues: Azurin-2 (129 aa).

One can recognise a Plastocyanin-like domain in the interval 1 to 129 (AQCEATVESN…MMKGTLKLGS (129 aa)). Cys3 and Cys26 are oxidised to a cystine. The Cu cation site is built by His46, Cys112, His117, and Met121.

The protein localises to the periplasm. Transfers electrons from cytochrome c551 to cytochrome oxidase. This Alcaligenes xylosoxydans xylosoxydans (Achromobacter xylosoxidans) protein is Azurin-2.